The chain runs to 208 residues: uncharacterized protein (208 aa).

Positions 4–71 (DYYAILNITP…SRRAQYDRES (68 aa)) constitute a J domain. The disordered stretch occupies residues 67-100 (YDRESASSSAKPRQSFFSRTNPQPQSQSQQGGPS). Over residues 72–87 (ASSSAKPRQSFFSRTN) the composition is skewed to polar residues. A compositionally biased stretch (low complexity) spans 88–100 (PQPQSQSQQGGPS). A helical membrane pass occupies residues 127-147 (GIANAFWTIVGTLAGAALGFI).

It belongs to the DnaJ family.

It is found in the endoplasmic reticulum membrane. This is an uncharacterized protein from Schizosaccharomyces pombe (strain 972 / ATCC 24843) (Fission yeast).